We begin with the raw amino-acid sequence, 378 residues long: Myoglobin (378 aa).

The residue at position 2 (Ala-2) is a Blocked amino end (Ala). His-332 is a heme binding site.

The protein belongs to the indoleamine 2,3-dioxygenase family. In terms of assembly, homodimer. It depends on heme as a cofactor.

In terms of biological role, serves a reserve supply of oxygen and facilitates the movement of oxygen within muscles. The chain is Myoglobin from Haliotis diversicolor (Abalone).